The following is a 203-amino-acid chain: Large ribosomal subunit protein bL25 (203 aa).

It belongs to the bacterial ribosomal protein bL25 family. CTC subfamily. As to quaternary structure, part of the 50S ribosomal subunit; part of the 5S rRNA/L5/L18/L25 subcomplex. Contacts the 5S rRNA. Binds to the 5S rRNA independently of L5 and L18.

Its function is as follows. This is one of the proteins that binds to the 5S RNA in the ribosome where it forms part of the central protuberance. In Cupriavidus pinatubonensis (strain JMP 134 / LMG 1197) (Cupriavidus necator (strain JMP 134)), this protein is Large ribosomal subunit protein bL25.